A 445-amino-acid polypeptide reads, in one-letter code: 3-phosphoshikimate 1-carboxyvinyltransferase (445 aa).

The segment at 1-25 is disordered; sequence MSGHGPAQPMTARRSGPLKGRAEIP. Positions 28, 29, and 33 each coordinate 3-phosphoshikimate. Phosphoenolpyruvate is bound at residue lysine 28. Glycine 101 and arginine 129 together coordinate phosphoenolpyruvate. 4 residues coordinate 3-phosphoshikimate: serine 174, glutamine 176, aspartate 326, and lysine 353. Phosphoenolpyruvate is bound at residue glutamine 176. The active-site Proton acceptor is the aspartate 326. Positions 357 and 400 each coordinate phosphoenolpyruvate.

It belongs to the EPSP synthase family. In terms of assembly, monomer.

The protein localises to the cytoplasm. It carries out the reaction 3-phosphoshikimate + phosphoenolpyruvate = 5-O-(1-carboxyvinyl)-3-phosphoshikimate + phosphate. Its pathway is metabolic intermediate biosynthesis; chorismate biosynthesis; chorismate from D-erythrose 4-phosphate and phosphoenolpyruvate: step 6/7. In terms of biological role, catalyzes the transfer of the enolpyruvyl moiety of phosphoenolpyruvate (PEP) to the 5-hydroxyl of shikimate-3-phosphate (S3P) to produce enolpyruvyl shikimate-3-phosphate and inorganic phosphate. This is 3-phosphoshikimate 1-carboxyvinyltransferase from Cereibacter sphaeroides (strain ATCC 17029 / ATH 2.4.9) (Rhodobacter sphaeroides).